A 282-amino-acid polypeptide reads, in one-letter code: Ribosomal RNA small subunit methyltransferase A (282 aa).

A disordered region spans residues 1-21; the sequence is MPDFPKEHATPMSNRPPAHQA. S-adenosyl-L-methionine is bound by residues Asn28, Leu30, Gly55, Glu76, Asp101, and Asn126.

It belongs to the class I-like SAM-binding methyltransferase superfamily. rRNA adenine N(6)-methyltransferase family. RsmA subfamily.

The protein resides in the cytoplasm. The enzyme catalyses adenosine(1518)/adenosine(1519) in 16S rRNA + 4 S-adenosyl-L-methionine = N(6)-dimethyladenosine(1518)/N(6)-dimethyladenosine(1519) in 16S rRNA + 4 S-adenosyl-L-homocysteine + 4 H(+). In terms of biological role, specifically dimethylates two adjacent adenosines (A1518 and A1519) in the loop of a conserved hairpin near the 3'-end of 16S rRNA in the 30S particle. May play a critical role in biogenesis of 30S subunits. This Chromohalobacter salexigens (strain ATCC BAA-138 / DSM 3043 / CIP 106854 / NCIMB 13768 / 1H11) protein is Ribosomal RNA small subunit methyltransferase A.